The following is a 376-amino-acid chain: Peroxisomal targeting signal 2 receptor (376 aa).

WD repeat units follow at residues 58–98, 102–142, 182–222, 226–267, 279–319, and 339–376; these read DTQD…YPVM, EHQR…NTSL, DNND…PLFM, AHNG…PNVH, GHEF…TSRV, and AHTEFVMGCDWSLWGEPGWVVTTGWDEMVYVWNTQRLQ.

The protein belongs to the WD repeat peroxin-7 family. In terms of assembly, interacts with PEX20. Polyubiquitinated, leading to its degradation by the proteasome. Ubiquitination is dependent of PEX5 and PEX20 and takes place following recycling into the cytosol.

The protein localises to the cytoplasm. It localises to the cytosol. It is found in the peroxisome matrix. In terms of biological role, receptor required for the peroxisomal import of proteins containing a C-terminal PTS2-type peroxisomal targeting signal, such as 3-oxoacyl-CoA thiolase. Specifically binds to cargo proteins containing a PTS2 peroxisomal targeting signal in the cytosol. Cargo protein-binding triggers interaction with PEX20 and formation of a ternary complex composed of PEX20 and PEX7 along with PTS2-containing cargo proteins, which is tranlocated into peroxisomes by passing through the peroxisomal docking complex. PEX7 receptor is then retrotranslocated into the cytosol, where it is ubiquitinated and degraded. The sequence is that of Peroxisomal targeting signal 2 receptor from Komagataella phaffii (strain GS115 / ATCC 20864) (Yeast).